Here is a 501-residue protein sequence, read N- to C-terminus: Raftlin-2 (501 aa).

2 disordered regions span residues 1–20 and 196–239; these read MGCG…GKIF and SWNE…RKGE. Residue Gly-2 is the site of N-myristoyl glycine attachment. Cys-3 carries S-palmitoyl cysteine lipidation. Residues 220–233 show a composition bias toward polar residues; sequence GQYQMEQNGSPTSS. Ser-405 carries the post-translational modification Phosphoserine. The segment at 407-449 is disordered; that stretch reads AQTPDKKASRHIKGEDKNKATSRSIGLDTTSSQPAESRHLPEE. Thr-409 bears the Phosphothreonine mark. A compositionally biased stretch (basic and acidic residues) spans 410 to 425; the sequence is PDKKASRHIKGEDKNK. A compositionally biased stretch (polar residues) spans 427-441; that stretch reads TSRSIGLDTTSSQPA. Ser-430 carries the post-translational modification Phosphoserine.

Belongs to the raftlin family.

The protein localises to the cell membrane. Upon bacterial lipopolysaccharide stimulation, mediates clathrin-dependent internalization of TLR4 in dendritic cells, resulting in activation of TICAM1-mediated signaling and subsequent IFNB1 production. May regulate B-cell antigen receptor-mediated signaling. The polypeptide is Raftlin-2 (RFTN2) (Homo sapiens (Human)).